The primary structure comprises 313 residues: Porphobilinogen deaminase (313 aa).

The residue at position 241 (C241) is an S-(dipyrrolylmethanemethyl)cysteine.

The protein belongs to the HMBS family. As to quaternary structure, monomer. Dipyrromethane serves as cofactor.

It catalyses the reaction 4 porphobilinogen + H2O = hydroxymethylbilane + 4 NH4(+). It participates in porphyrin-containing compound metabolism; protoporphyrin-IX biosynthesis; coproporphyrinogen-III from 5-aminolevulinate: step 2/4. The protein operates within porphyrin-containing compound metabolism; chlorophyll biosynthesis. Its function is as follows. Tetrapolymerization of the monopyrrole PBG into the hydroxymethylbilane pre-uroporphyrinogen in several discrete steps. The chain is Porphobilinogen deaminase from Chlorobium limicola (strain DSM 245 / NBRC 103803 / 6330).